Here is a 711-residue protein sequence, read N- to C-terminus: HTYRPIAREEIQCAIKGWKPSAPGSDGLTVQAITRTRLPRNFVQLHLLRGHVPTPWTAMRTTLIPKDGDLENPSNWRPITIASALQRLLHRILAKRLEAAVELHPAQKGYARIDGTLVNSLLLDTYISSRREQRKTYNVVSLDVRKAFDTVSHSSICRALQRLGIDEGTSNYITGSLSDSTTTIRVGPGSQTRKICIRRGVKQGDPLSPFLFNAVLDELLCSLQSTPGIGGTIGEEKIPVLAFADDLLLLEDNDVLLPTTLATVANFFRLRGMSLNAKKSVSISVAASGGVCIPRTKPFLRVDNVLLPVTDRMQTFRYLGHFFGLSGAAKPTVYNLSRWLKCVEAAPLKPEQKLSLIREHVVPKLLYGLQNPSVTARTLRDADKLIRTTVKRCLHLHLHTPNQCFYARVRDGGLGLTDLRRSIPRIMLDRINARRSSDPMAVALFSCPSFDHLRGRLVALAGDVPPSHFWREAIANHTTTKGLEAASDDPASRSWIFRKPYGWSGKDFVRAIHLRTGNLPTKAIPSNPAGERLCRGGCGKQATISHVLQRCPVVQPERIRRHNEIARKIAAHCRSKGWTVEEEPHIRHPLGHLYKPDIVIHREGLPSVVCDVQVSWDGYEPLDEAWRNKQRTYDHDLFRTAAGRRWPGKTFLHLPAILGARGIWPRCNSETASALAFTNQLKASWLHSCLKWDSTLHTSFMRAVWSRQAGA.

The Reverse transcriptase domain occupies 45–323; that stretch reads LHLLRGHVPT…QTFRYLGHFF (279 aa). The interval 444 to 711 is nucleic acid-binding endonuclease; that stretch reads LFSCPSFDHL…RAVWSRQAGA (268 aa).

The catalysed reaction is DNA(n) + a 2'-deoxyribonucleoside 5'-triphosphate = DNA(n+1) + diphosphate. This chain is Retrovirus-related Pol polyprotein from type-1 retrotransposable element R2, found in Popillia japonica (Japanese beetle).